We begin with the raw amino-acid sequence, 107 residues long: SH3 domain-binding glutamic acid-rich-like protein 2 (107 aa).

The SH3-binding motif lies at 61–67; the sequence is QGNPLPP.

It belongs to the SH3BGR family. Highly expressed in brain, placenta, liver and kidney. Expressed in retina.

It localises to the nucleus. The chain is SH3 domain-binding glutamic acid-rich-like protein 2 (SH3BGRL2) from Homo sapiens (Human).